Here is a 120-residue protein sequence, read N- to C-terminus: Transcription elongation factor 1 homolog (120 aa).

Residues Cys-25, Cys-28, Cys-49, and Cys-52 each coordinate Zn(2+). The span at 84-110 (EDDVVQEEEEEVEEEEEEEEEEDDEDD) shows a compositional bias: acidic residues. Residues 84 to 120 (EDDVVQEEEEEVEEEEEEEEEEDDEDDHVSVKRKYNF) form a disordered region.

The protein belongs to the ELOF1 family.

It localises to the nucleus. Its function is as follows. Transcription elongation factor implicated in the maintenance of proper chromatin structure in actively transcribed regions. The chain is Transcription elongation factor 1 homolog from Arabidopsis thaliana (Mouse-ear cress).